The chain runs to 720 residues: Exocyst complex component 7 (720 aa).

Coiled coils occupy residues 5–34 (EDAS…SLEK) and 63–83 (VHKQ…TLSN). Ser133 is subject to Phosphoserine. A disordered region spans residues 249-268 (SPAVQTKRKETPTKKAPKRP).

It belongs to the EXO70 family.

Its subcellular location is the cytoplasm. It is found in the cytosol. The protein localises to the cell membrane. The protein resides in the midbody. It localises to the midbody ring. Component of the exocyst complex involved in the docking of exocytic vesicles with fusion sites on the plasma membrane. It is required for neuron survival and plays an essential role in telencephalon development. The protein is Exocyst complex component 7 (exoc7) of Danio rerio (Zebrafish).